Reading from the N-terminus, the 167-residue chain is Large ribosomal subunit protein uL10 (167 aa).

The protein belongs to the universal ribosomal protein uL10 family. As to quaternary structure, part of the ribosomal stalk of the 50S ribosomal subunit. The N-terminus interacts with L11 and the large rRNA to form the base of the stalk. The C-terminus forms an elongated spine to which L12 dimers bind in a sequential fashion forming a multimeric L10(L12)X complex.

In terms of biological role, forms part of the ribosomal stalk, playing a central role in the interaction of the ribosome with GTP-bound translation factors. The protein is Large ribosomal subunit protein uL10 of Mycoplasma mobile (strain ATCC 43663 / 163K / NCTC 11711) (Mesomycoplasma mobile).